Here is a 141-residue protein sequence, read N- to C-terminus: Hemoglobin subunit alpha (141 aa).

Residues 1-141 enclose the Globin domain; sequence VLSPADKTNL…VSTVLTSKYR (141 aa). Ser3 carries the phosphoserine modification. Lys7 is subject to N6-succinyllysine. Residue Thr8 is modified to Phosphothreonine. Lys11 is modified (N6-succinyllysine). An N6-acetyllysine; alternate modification is found at Lys16. N6-succinyllysine; alternate is present on Lys16. Phosphotyrosine is present on Tyr24. N6-succinyllysine is present on Lys40. Ser49 carries the phosphoserine modification. His58 contacts O2. Position 87 (His87) interacts with heme b. Position 102 is a phosphoserine (Ser102). Position 108 is a phosphothreonine (Thr108). Ser124 carries the phosphoserine modification. 2 positions are modified to phosphothreonine: Thr134 and Thr137. The residue at position 138 (Ser138) is a Phosphoserine.

Belongs to the globin family. As to quaternary structure, heterotetramer of two alpha chains and two beta chains. Red blood cells.

Its function is as follows. Involved in oxygen transport from the lung to the various peripheral tissues. This chain is Hemoglobin subunit alpha, found in Tamias striatus (Eastern chipmunk).